A 78-amino-acid chain; its full sequence is Probable [Fe-S]-dependent transcriptional repressor (78 aa).

Positions 56, 61, 64, and 70 each coordinate iron-sulfur cluster.

The protein belongs to the FeoC family.

In terms of biological role, may function as a transcriptional regulator that controls feoABC expression. The chain is Probable [Fe-S]-dependent transcriptional repressor from Salmonella agona (strain SL483).